A 314-amino-acid polypeptide reads, in one-letter code: Olfactory receptor 6C6 (314 aa).

Over 1 to 24 (MKNKSMEIEFILLGLTDDPQLQIV) the chain is Extracellular. Asn-3 is a glycosylation site (N-linked (GlcNAc...) asparagine). Residues 25–45 (IFLFLFLNYTLSLMGNLIIII) traverse the membrane as a helical segment. Residues 46 to 63 (LTLLDPRLKTPMYFFLRN) lie on the Cytoplasmic side of the membrane. Residues 64–84 (FSFLEVIFTTVCIPRFLITIV) traverse the membrane as a helical segment. Over 85–95 (TRDKTISYNNC) the chain is Extracellular. Residues Cys-95 and Cys-177 are joined by a disulfide bond. The helical transmembrane segment at 96–116 (ATQLFFILLPGVTEFYLLAAM) threads the bilayer. The Cytoplasmic segment spans residues 117–141 (SYDRYVAICKPLHYPIIMSSKVCYQ). The chain crosses the membrane as a helical span at residues 142-162 (LVLSSWVTGFLIIFPPLVMGL). The Extracellular portion of the chain corresponds to 163 to 199 (KLDFCASKTIDHFMCETSPILQISCTDTHVLELMSFT). The helical transmembrane segment at 200–220 (LAVVTLVVTLVLVILSYTCII) threads the bilayer. Residues 221–237 (KTILKFSSAQQRNKAFS) lie on the Cytoplasmic side of the membrane. Residues 238 to 258 (TCTSHMIVVSMTYGSCIFMYI) traverse the membrane as a helical segment. Residues 259–269 (KPSAKERVTVS) are Extracellular-facing. The chain crosses the membrane as a helical span at residues 270 to 290 (KGVALLYTSIAPLLNPFIYTL). Topologically, residues 291-314 (RNQQVKEVFWDVLQKNLCFSKRPF) are cytoplasmic.

The protein belongs to the G-protein coupled receptor 1 family.

It localises to the cell membrane. Functionally, odorant receptor. This is Olfactory receptor 6C6 (OR6C6) from Homo sapiens (Human).